The following is a 472-amino-acid chain: Ribosomal protein uS12 methylthiotransferase RimO (472 aa).

The 112-residue stretch at 22-133 (PSVAFAHLGC…IVDVLKRVEA (112 aa)) folds into the MTTase N-terminal domain. Cys31, Cys67, Cys96, Cys171, Cys175, and Cys178 together coordinate [4Fe-4S] cluster. The Radical SAM core domain maps to 157–386 (TTDQAVAYLK…MALQQPISAE (230 aa)). Residues 389–460 (QRWVGRTIDV…VYDLTGQLVD (72 aa)) form the TRAM domain.

This sequence belongs to the methylthiotransferase family. RimO subfamily. [4Fe-4S] cluster is required as a cofactor.

Its subcellular location is the cytoplasm. The catalysed reaction is L-aspartate(89)-[ribosomal protein uS12]-hydrogen + (sulfur carrier)-SH + AH2 + 2 S-adenosyl-L-methionine = 3-methylsulfanyl-L-aspartate(89)-[ribosomal protein uS12]-hydrogen + (sulfur carrier)-H + 5'-deoxyadenosine + L-methionine + A + S-adenosyl-L-homocysteine + 2 H(+). Catalyzes the methylthiolation of an aspartic acid residue of ribosomal protein uS12. This is Ribosomal protein uS12 methylthiotransferase RimO from Prochlorococcus marinus (strain MIT 9303).